We begin with the raw amino-acid sequence, 197 residues long: Putative ankyrin repeat protein R875 (197 aa).

ANK repeat units follow at residues 78–106 (LNKCLIGYCISGRLDIVKYLVILGADIRE), 107–136 (NDDCVVRTACHNGHIEVVKYLVNQGADIRA), 138–166 (DDDAIRLASKNGHLYVVKYLVSQGVNFRK), and 168–196 (NDYEINWASQNGHGSVVDFLVSKGAVLHE).

This chain is Putative ankyrin repeat protein R875, found in Acanthamoeba polyphaga mimivirus (APMV).